Reading from the N-terminus, the 199-residue chain is Putative 3-methyladenine DNA glycosylase (199 aa).

It belongs to the DNA glycosylase MPG family.

This chain is Putative 3-methyladenine DNA glycosylase, found in Rhizobium etli (strain ATCC 51251 / DSM 11541 / JCM 21823 / NBRC 15573 / CFN 42).